Here is a 293-residue protein sequence, read N- to C-terminus: MKRPDYRTLQALDAVIRERGFERAAQKLCITQSAVSQRIKQLENLFGQPLLVRTIPPHPTEQGQKLLALLHQVELLEEEWLGSDTPLLLSLAVNADSLATWLLPALKPVLSDLPIRLNLQVEDETRTQERLRRGEVVGAVSIQPQPLPSCLVDRLGALDYLFVASPSFAARYFPNGVTRSALLKAPAVAFDHLDDMHQSFLQQNFDLSPGSVPCHIVNSSEAFVQLARQGTTCCMIPHLQIERELEQRELIDLTPGLYQRRMLYWHRFAPESRMMRKVTDALLDHGHQVLRQD.

In terms of domain architecture, HTH lysR-type spans 4–60 (PDYRTLQALDAVIRERGFERAAQKLCITQSAVSQRIKQLENLFGQPLLVRTIPPHPT). The H-T-H motif DNA-binding region spans 21–40 (FERAAQKLCITQSAVSQRIK).

Belongs to the LysR transcriptional regulatory family. Homodimer.

Functionally, controls the transcription of genes involved in arginine and lysine metabolism. This Sodalis glossinidius (strain morsitans) protein is HTH-type transcriptional regulator ArgP.